The sequence spans 447 residues: MSNAKEKVSMVSLGCPKNLVDAEVMLGRLAKDRYEITTDEREADIIIVNTCSFIKEAKQESIDTILDLADRKQDGRCRLLIVTGCLPQRYQEELARELPEVDIFVGTGDYPRIAEIIEEKSSRPEQLRYIGDPNFVFDESLTRLNSSPAYTAYLKIAEGCSNCCSYCVIPSLRGAFRSRPLESVLAEARSLVAGGAREINLIAQDITTYGRDLPGAPSLETLIRELAAIDGLAWIRLLYAYPDGITDGLIQTIKNEPKVCKYLDLPIQHISDPILKRMNRRSTEPQIRELVARLREEIPDIALRTSLIVGFPGETEEDFRTLLHFVEEAQFDRLGVFCYSREEGTPAAEMPDQVSERVKRERYKKLMKAQARVSFKRNRRLIDTEEQVIVEGYSEETELLLKGRSSRQAPDIDGQVYITAGNANVGDIVRLRITDSSDYDLIGEIIS.

The region spanning 6 to 122 is the MTTase N-terminal domain; that stretch reads EKVSMVSLGC…IAEIIEEKSS (117 aa). Residues Cys-15, Cys-51, Cys-85, Cys-160, Cys-164, and Cys-167 each coordinate [4Fe-4S] cluster. One can recognise a Radical SAM core domain in the interval 146-376; the sequence is SSPAYTAYLK…MKAQARVSFK (231 aa). A TRAM domain is found at 379-447; sequence RRLIDTEEQV…DYDLIGEIIS (69 aa).

The protein belongs to the methylthiotransferase family. RimO subfamily. [4Fe-4S] cluster is required as a cofactor.

The protein localises to the cytoplasm. The catalysed reaction is L-aspartate(89)-[ribosomal protein uS12]-hydrogen + (sulfur carrier)-SH + AH2 + 2 S-adenosyl-L-methionine = 3-methylsulfanyl-L-aspartate(89)-[ribosomal protein uS12]-hydrogen + (sulfur carrier)-H + 5'-deoxyadenosine + L-methionine + A + S-adenosyl-L-homocysteine + 2 H(+). Functionally, catalyzes the methylthiolation of an aspartic acid residue of ribosomal protein uS12. In Geobacter sulfurreducens (strain ATCC 51573 / DSM 12127 / PCA), this protein is Ribosomal protein uS12 methylthiotransferase RimO.